The following is a 608-amino-acid chain: Elongation factor 4 (608 aa).

Residues 11–193 (KKIRNFSIIA…QIVEKVPEPS (183 aa)) form the tr-type G domain. Residues 23 to 28 (DHGKST) and 140 to 143 (NKID) contribute to the GTP site.

It belongs to the TRAFAC class translation factor GTPase superfamily. Classic translation factor GTPase family. LepA subfamily.

It is found in the cell membrane. The enzyme catalyses GTP + H2O = GDP + phosphate + H(+). Its function is as follows. Required for accurate and efficient protein synthesis under certain stress conditions. May act as a fidelity factor of the translation reaction, by catalyzing a one-codon backward translocation of tRNAs on improperly translocated ribosomes. Back-translocation proceeds from a post-translocation (POST) complex to a pre-translocation (PRE) complex, thus giving elongation factor G a second chance to translocate the tRNAs correctly. Binds to ribosomes in a GTP-dependent manner. This is Elongation factor 4 from Listeria welshimeri serovar 6b (strain ATCC 35897 / DSM 20650 / CCUG 15529 / CIP 8149 / NCTC 11857 / SLCC 5334 / V8).